The following is a 138-amino-acid chain: Small ribosomal subunit protein uS12 (138 aa).

A compositionally biased stretch (polar residues) spans 1–22 (MPTINQLVRQGRKSISTKSDSP). Residues 1 to 45 (MPTINQLVRQGRKSISTKSDSPALNFGYNSKKKSLTNNPAPQKRG) are disordered. Position 102 is a 3-methylthioaspartic acid (Asp-102).

This sequence belongs to the universal ribosomal protein uS12 family. In terms of assembly, part of the 30S ribosomal subunit. Contacts proteins S8 and S17. May interact with IF1 in the 30S initiation complex.

Functionally, with S4 and S5 plays an important role in translational accuracy. Its function is as follows. Interacts with and stabilizes bases of the 16S rRNA that are involved in tRNA selection in the A site and with the mRNA backbone. Located at the interface of the 30S and 50S subunits, it traverses the body of the 30S subunit contacting proteins on the other side and probably holding the rRNA structure together. The combined cluster of proteins S8, S12 and S17 appears to hold together the shoulder and platform of the 30S subunit. The sequence is that of Small ribosomal subunit protein uS12 from Lacticaseibacillus paracasei (strain ATCC 334 / BCRC 17002 / CCUG 31169 / CIP 107868 / KCTC 3260 / NRRL B-441) (Lactobacillus paracasei).